Here is a 555-residue protein sequence, read N- to C-terminus: CTP synthase (555 aa).

Residues 1–265 (MTRYIFITGG…GNRVCEKLNI (265 aa)) are amidoligase domain. Ser-13 is a binding site for CTP. Ser-13 lines the UTP pocket. ATP is bound by residues 14-19 (SLGKGI) and Asp-71. Mg(2+)-binding residues include Asp-71 and Glu-139. CTP-binding positions include 146-148 (DIE), 186-191 (KTKPTQ), and Lys-222. UTP is bound by residues 186–191 (KTKPTQ) and Lys-222. The 252-residue stretch at 290–541 (TVAVVGKYVD…IKAGLAAKEA (252 aa)) folds into the Glutamine amidotransferase type-1 domain. L-glutamine is bound at residue Gly-351. Cys-378 serves as the catalytic Nucleophile; for glutamine hydrolysis. L-glutamine-binding positions include 379 to 382 (LGMQ), Glu-402, and Arg-469. Residues His-514 and Glu-516 contribute to the active site.

It belongs to the CTP synthase family. In terms of assembly, homotetramer.

The catalysed reaction is UTP + L-glutamine + ATP + H2O = CTP + L-glutamate + ADP + phosphate + 2 H(+). It carries out the reaction L-glutamine + H2O = L-glutamate + NH4(+). The enzyme catalyses UTP + NH4(+) + ATP = CTP + ADP + phosphate + 2 H(+). It participates in pyrimidine metabolism; CTP biosynthesis via de novo pathway; CTP from UDP: step 2/2. With respect to regulation, allosterically activated by GTP, when glutamine is the substrate; GTP has no effect on the reaction when ammonia is the substrate. The allosteric effector GTP functions by stabilizing the protein conformation that binds the tetrahedral intermediate(s) formed during glutamine hydrolysis. Inhibited by the product CTP, via allosteric rather than competitive inhibition. Its function is as follows. Catalyzes the ATP-dependent amination of UTP to CTP with either L-glutamine or ammonia as the source of nitrogen. Regulates intracellular CTP levels through interactions with the four ribonucleotide triphosphates. In Coxiella burnetii (strain Dugway 5J108-111), this protein is CTP synthase.